Here is a 130-residue protein sequence, read N- to C-terminus: Small ribosomal subunit protein uS11 (130 aa).

The protein belongs to the universal ribosomal protein uS11 family. As to quaternary structure, part of the 30S ribosomal subunit. Interacts with proteins S7 and S18. Binds to IF-3.

Its function is as follows. Located on the platform of the 30S subunit, it bridges several disparate RNA helices of the 16S rRNA. Forms part of the Shine-Dalgarno cleft in the 70S ribosome. This is Small ribosomal subunit protein uS11 from Microcystis aeruginosa (strain NIES-843 / IAM M-2473).